Reading from the N-terminus, the 213-residue chain is 3-isopropylmalate dehydratase small subunit (213 aa).

The protein belongs to the LeuD family. LeuD type 1 subfamily. Heterodimer of LeuC and LeuD.

It carries out the reaction (2R,3S)-3-isopropylmalate = (2S)-2-isopropylmalate. Its pathway is amino-acid biosynthesis; L-leucine biosynthesis; L-leucine from 3-methyl-2-oxobutanoate: step 2/4. Catalyzes the isomerization between 2-isopropylmalate and 3-isopropylmalate, via the formation of 2-isopropylmaleate. This chain is 3-isopropylmalate dehydratase small subunit, found in Neisseria meningitidis serogroup B (strain ATCC BAA-335 / MC58).